The following is a 567-amino-acid chain: Structural protein ORF567 (567 aa).

A disordered region spans residues 7 to 393; that stretch reads INALLGFPEE…MPIEHKPEQQ (387 aa). Residues 65–79 show a composition bias toward pro residues; that stretch reads TPTPIRPAPPPPPPI. A compositionally biased stretch (basic and acidic residues) spans 180–200; sequence PKREPEHHTHGSTNNEHESKR. The span at 219–231 shows a compositional bias: low complexity; that stretch reads THQTSPSHSSGGT. Composition is skewed to pro residues over residues 253–278 and 285–299; these read MPIP…PTPP and TPTP…PPPT. Residues 300–312 are compositionally biased toward low complexity; it reads HGSSSTNSSGSTN. Residues 319–335 are compositionally biased toward pro residues; that stretch reads PKPIPIPPTPPPPPPHH. Residues 343–353 are compositionally biased toward basic and acidic residues; it reads PKHESEHHDHG. The segment covering 354–372 has biased composition (low complexity); the sequence is SSSTNSSSSTSNSSSGGTN.

It localises to the virion. The sequence is that of Structural protein ORF567 from Acidianus two-tailed virus (ATV).